The sequence spans 264 residues: Small ribosomal subunit protein uS3 (264 aa).

The 69-residue stretch at 39–107 (VREYLKKKLK…PVHVNIEEIR (69 aa)) folds into the KH type-2 domain. The tract at residues 214–264 (PVETAAPREEERRPRRAPRGDRPDGARNGRPGGGRGRAPRKADAAPAPEGE) is disordered. Over residues 219–240 (APREEERRPRRAPRGDRPDGAR) the composition is skewed to basic and acidic residues.

This sequence belongs to the universal ribosomal protein uS3 family. As to quaternary structure, part of the 30S ribosomal subunit. Forms a tight complex with proteins S10 and S14.

Its function is as follows. Binds the lower part of the 30S subunit head. Binds mRNA in the 70S ribosome, positioning it for translation. The polypeptide is Small ribosomal subunit protein uS3 (Bordetella avium (strain 197N)).